Consider the following 158-residue polypeptide: MKTYSAKPSEIEKKWWVIDAKNIVLGRLASRVANMLRGKHKPSFTPHLDCGDNIIIINAAHVKLTGKKANTKDGKIYYRHTGFPGGIKNTTAGKILAGKHPERVIKMAVKRMITRNALGAKQMSNLYVYANSDHPHVGQEPVIYDFASQNPKNKSNYL.

It belongs to the universal ribosomal protein uL13 family. In terms of assembly, part of the 50S ribosomal subunit.

In terms of biological role, this protein is one of the early assembly proteins of the 50S ribosomal subunit, although it is not seen to bind rRNA by itself. It is important during the early stages of 50S assembly. The polypeptide is Large ribosomal subunit protein uL13 (Rickettsia canadensis (strain McKiel)).